Reading from the N-terminus, the 206-residue chain is LexA repressor (206 aa).

A DNA-binding region (H-T-H motif) is located at residues 28 to 48 (VREIGEAVGLASSSTVHGHLD). Catalysis depends on for autocatalytic cleavage activity residues serine 128 and lysine 166.

This sequence belongs to the peptidase S24 family. In terms of assembly, homodimer.

It catalyses the reaction Hydrolysis of Ala-|-Gly bond in repressor LexA.. In terms of biological role, represses a number of genes involved in the response to DNA damage (SOS response), including recA and lexA. In the presence of single-stranded DNA, RecA interacts with LexA causing an autocatalytic cleavage which disrupts the DNA-binding part of LexA, leading to derepression of the SOS regulon and eventually DNA repair. In Exiguobacterium sp. (strain ATCC BAA-1283 / AT1b), this protein is LexA repressor.